The sequence spans 222 residues: Cytidylate kinase (222 aa).

Position 9 to 17 (9 to 17 (GPAGSGKTT)) interacts with ATP.

This sequence belongs to the cytidylate kinase family. Type 1 subfamily.

The protein localises to the cytoplasm. It carries out the reaction CMP + ATP = CDP + ADP. The catalysed reaction is dCMP + ATP = dCDP + ADP. This Thermosipho africanus (strain TCF52B) protein is Cytidylate kinase.